We begin with the raw amino-acid sequence, 928 residues long: Chromatin structure-remodeling complex subunit RSC1 (928 aa).

Bromo domains lie at 4–112 and 240–342; these read QDNG…IVHN and RIKN…VRIE. In terms of domain architecture, BAH spans 368–486; the sequence is EKYQIGDWVL…ESDKVFNKIR (119 aa). 4 disordered regions span residues 558-586, 598-635, 657-701, and 871-908; these read DDLG…GKID, TTSS…NTPL, HNLL…KPAS, and IASG…TTSA. The span at 600-620 shows a compositional bias: polar residues; sequence SSMPRVNSSSTIRLPTLKQTK. Positions 621–631 are enriched in low complexity; that stretch reads SIPSSNFRSSS. The segment covering 667-679 has biased composition (polar residues); sequence KFQSPSLLEQSSR. Ser670 is modified (phosphoserine). Residues 692 to 701 show a composition bias toward low complexity; the sequence is SSTAPKKPAS. Residues 883-902 show a composition bias toward acidic residues; the sequence is TAEESEDENEDTEDEHEIED.

It belongs to the RSC1 family. Component of the two forms of the RSC complex composed of at least either RSC1 or RSC2, and ARP7, ARP9, LDB7, NPL6, RSC3, RSC30, RSC4, RSC58, RSC6, RSC8, RSC9, SFH1, STH1, HTL1 and probably RTT102. The complexes interact with histone and histone variant components of centromeric chromatin.

The protein resides in the nucleus. Component of the chromatin structure remodeling complex (RSC), which is involved in transcription regulation and nucleosome positioning. RSC is responsible for the transfer of a histone octamer from a nucleosome core particle to naked DNA. The reaction requires ATP and involves an activated RSC-nucleosome intermediate. Remodeling reaction also involves DNA translocation, DNA twist and conformational change. As a reconfigurer of centromeric and flanking nucleosomes, RSC complex is required both for proper kinetochore function in chromosome segregation and, via a PKC1-dependent signaling pathway, for organization of the cellular cytoskeleton. This subunit is involved in meiotic sporulation through regulating IME2 expression. The sequence is that of Chromatin structure-remodeling complex subunit RSC1 (RSC1) from Saccharomyces cerevisiae (strain ATCC 204508 / S288c) (Baker's yeast).